Consider the following 712-residue polypeptide: tRNA 5-methylaminomethyl-2-thiouridine biosynthesis bifunctional protein MnmC (712 aa).

The tRNA (mnm(5)s(2)U34)-methyltransferase stretch occupies residues 1–268 (MPNMRHRVNS…RRALRHAQSD (268 aa)). An FAD-dependent cmnm(5)s(2)U34 oxidoreductase region spans residues 292–712 (IGGGVASTHL…MRKLIKGKAL (421 aa)).

The protein in the N-terminal section; belongs to the methyltransferase superfamily. tRNA (mnm(5)s(2)U34)-methyltransferase family. It in the C-terminal section; belongs to the DAO family. Requires FAD as cofactor.

Its subcellular location is the cytoplasm. The enzyme catalyses 5-aminomethyl-2-thiouridine(34) in tRNA + S-adenosyl-L-methionine = 5-methylaminomethyl-2-thiouridine(34) in tRNA + S-adenosyl-L-homocysteine + H(+). Catalyzes the last two steps in the biosynthesis of 5-methylaminomethyl-2-thiouridine (mnm(5)s(2)U) at the wobble position (U34) in tRNA. Catalyzes the FAD-dependent demodification of cmnm(5)s(2)U34 to nm(5)s(2)U34, followed by the transfer of a methyl group from S-adenosyl-L-methionine to nm(5)s(2)U34, to form mnm(5)s(2)U34. The sequence is that of tRNA 5-methylaminomethyl-2-thiouridine biosynthesis bifunctional protein MnmC from Shewanella sediminis (strain HAW-EB3).